The primary structure comprises 254 residues: Glutamate racemase (254 aa).

Substrate is bound by residues 7 to 8 (DS) and 39 to 40 (YG). The active-site Proton donor/acceptor is Cys-70. Substrate contacts are provided by residues 71-72 (NT) and Glu-147. Residue Cys-178 is the Proton donor/acceptor of the active site. Residue 179 to 180 (TH) coordinates substrate.

This sequence belongs to the aspartate/glutamate racemases family. As to quaternary structure, homodimer.

The enzyme catalyses L-glutamate = D-glutamate. It functions in the pathway cell wall biogenesis; peptidoglycan biosynthesis. Functionally, provides the (R)-glutamate required for cell wall biosynthesis. Converts L- or D-glutamate to D- or L-glutamate, respectively, but not other amino acids such as alanine, aspartate, and glutamine. The polypeptide is Glutamate racemase (Aquifex pyrophilus).